The chain runs to 440 residues: MAKSQNKESYNKIFAKLKEHHKWFENSIPLIASENIPSPAVREAVISDFGNRYAEGWPGERVYAGCIYIDDVEFECMKLAKKLYKAKFADVRPISGVVANLAVYSAYSNPGDVMLAPSIPAGGHISHGKKEHSGTAGLVHGLEIEFYPFDAEEMTIDVDKTKQKVKELKKNNRLPKIAMFGGSLFLFPHPVKELSDFLKSYDMHINYDAAHVAGLIAGGKFQDPLKEGADTMTMSTHKTLFGPQGGLVLGSEKHEEPIKKATFPGLTSSHHINNMAGKAVAFAEALEFGKDYAAQVIKNAKSFAEALSDAGFKVLGESRGFTQSHQIAVNVLDYSDGGKVEADLEKANIIVNRQLIPGDIKAGRNYFHPGGIRLGVSEITRLGMKKNEMQEIASFIKQVVIEKKDPKKLLSKVKSFRKNYQKVKFCFDNKLGAYEYVKLR.

(6S)-5,6,7,8-tetrahydrofolate is bound at residue 123–125; that stretch reads GHI. N6-(pyridoxal phosphate)lysine is present on Lys238.

This sequence belongs to the SHMT family. Homodimer. It depends on pyridoxal 5'-phosphate as a cofactor.

The protein resides in the cytoplasm. The protein operates within amino-acid biosynthesis; glycine biosynthesis; glycine from L-serine: step 1/1. Functionally, catalyzes the reversible interconversion of serine and glycine with a modified folate serving as the one-carbon carrier. Also exhibits a pteridine-independent aldolase activity toward beta-hydroxyamino acids, producing glycine and aldehydes, via a retro-aldol mechanism. This is Serine hydroxymethyltransferase from Nitrosopumilus maritimus (strain SCM1).